Consider the following 473-residue polypeptide: 6-phospho-beta-glucosidase (473 aa).

E174 (proton donor) is an active-site residue. Catalysis depends on E366, which acts as the Nucleophile.

This sequence belongs to the glycosyl hydrolase 1 family.

The enzyme catalyses 6-phospho-beta-D-glucosyl-(1-&gt;4)-D-glucose + H2O = D-glucose 6-phosphate + D-glucose. This chain is 6-phospho-beta-glucosidase (abgA), found in Clostridium longisporum.